The chain runs to 168 residues: Cysteine-rich perinuclear theca protein 1 (168 aa).

The interval 144-168 (NVSDPEEVPPCLDSDPFPNGDLASS) is disordered.

In terms of tissue distribution, specifically expressed in spermatozoa (at protein level). Detected from the elongated spermatid stage onwards; not found in immature germ cells or somatic cells (at protein level).

The protein resides in the cytoplasm. The protein localises to the cytoskeleton. Its subcellular location is the perinuclear theca. This is Cysteine-rich perinuclear theca protein 1 from Mus musculus (Mouse).